The following is a 481-amino-acid chain: Keratin, type I cytoskeletal 39 (481 aa).

The tract at residues 1–25 is disordered; it reads MDTKGSTVTISSSTPPQNCSGNTNV. The tract at residues 1–90 is head; that stretch reads MDTKGSTVTI…RCSDGINSHE (90 aa). In terms of domain architecture, IF rod spans 90 to 401; that stretch reads EKETMQILNE…SLLESLDGRL (312 aa). The tract at residues 91-125 is coil 1A; that stretch reads KETMQILNERLASYLEKVRMLEGENADLEDKIQEE. The interval 126 to 136 is linker 1; the sequence is CSKTLPILCPD. Residues 137–237 form a coil 1B region; it reads YLSYYTTIEQ…HEEEINSLQC (101 aa). Residues 238–253 form a linker 12 region; sequence QLGDRINIEVTAAPSV. The segment at 254–397 is coil 2; sequence DLNQILQKMR…ATYRSLLESL (144 aa). The segment at 398–481 is tail; the sequence is DGRLPCNPCT…PCYITRPAKV (84 aa).

The protein belongs to the intermediate filament family. As to quaternary structure, heterotetramer of two type I and two type II keratins.

In terms of biological role, may play a role in late hair differentiation. This chain is Keratin, type I cytoskeletal 39 (Krt39), found in Rattus norvegicus (Rat).